Here is a 407-residue protein sequence, read N- to C-terminus: Imidazolonepropionase (407 aa).

Fe(3+) contacts are provided by H68 and H70. Zn(2+) is bound by residues H68 and H70. Residues R77, Y140, and H173 each contribute to the 4-imidazolone-5-propanoate site. Y140 contributes to the N-formimidoyl-L-glutamate binding site. H238 is a Fe(3+) binding site. H238 contacts Zn(2+). Q241 is a 4-imidazolone-5-propanoate binding site. D313 is a binding site for Fe(3+). D313 contacts Zn(2+). The N-formimidoyl-L-glutamate site is built by N315 and G317. 4-imidazolone-5-propanoate is bound at residue T318.

It belongs to the metallo-dependent hydrolases superfamily. HutI family. Zn(2+) is required as a cofactor. Fe(3+) serves as cofactor.

Its subcellular location is the cytoplasm. It catalyses the reaction 4-imidazolone-5-propanoate + H2O = N-formimidoyl-L-glutamate. It functions in the pathway amino-acid degradation; L-histidine degradation into L-glutamate; N-formimidoyl-L-glutamate from L-histidine: step 3/3. Its function is as follows. Catalyzes the hydrolytic cleavage of the carbon-nitrogen bond in imidazolone-5-propanoate to yield N-formimidoyl-L-glutamate. It is the third step in the universal histidine degradation pathway. This Burkholderia cenocepacia (strain ATCC BAA-245 / DSM 16553 / LMG 16656 / NCTC 13227 / J2315 / CF5610) (Burkholderia cepacia (strain J2315)) protein is Imidazolonepropionase.